Here is a 276-residue protein sequence, read N- to C-terminus: Ammonia monooxygenase alpha subunit (276 aa).

Transmembrane regions (helical) follow at residues 29-49 (VYFP…FMLL), 66-86 (PVVT…YLWV), 96-116 (LCVV…FYWW), 123-143 (FVTP…LYLT), and 150-170 (ALVG…PIFG). Cu(+)-binding residues include Asp187, His191, and His204. Residues 219–239 (VIAAFFSAFVSMLMFTVWWYL) form a helical membrane-spanning segment.

The soluble ammonia monooxygenase is a nonamer composed of three alpha subunits (AmoA), three beta subunits (AmoB) and three gamma subunits (Cytochrome c1 PetC). Cu(+) is required as a cofactor.

The protein localises to the cell membrane. It localises to the cytoplasm. The catalysed reaction is AH2 + NH4(+) + O2 = hydroxylamine + A + H2O + H(+). Its activity is regulated as follows. In vitro, inhibited by acetylene. In fact, acetylene is oxidized to ketene which binds irreversibly to His-191 of ammonia monooxygenase alpha subunit (AmoA). Functionally, part of the ammonia monooxygenase complex, which catalyzes the oxidation of ammonia to hydroxylamine, the first reaction in the process of ammonia oxidation to nitrite. The chain is Ammonia monooxygenase alpha subunit from Nitrosomonas europaea (strain ATCC 19718 / CIP 103999 / KCTC 2705 / NBRC 14298).